A 45-amino-acid chain; its full sequence is Sperm-specific protein Phi-3 (45 aa).

The interval 1–45 (AKAKRSPRKKKAAVKKSSKSKAKKPKSPKKKKAAKKPAKKAAKKK) is disordered.

It localises to the nucleus. The protein resides in the chromosome. Its function is as follows. Involved in nuclear basic protein transition: histones are replaced by spermatid specific proteins which are themselves replaced by protamines in late spermatids. The chain is Sperm-specific protein Phi-3 from Mytilus californianus (California mussel).